The primary structure comprises 98 residues: MSLLDYFRSSKSKTASVAKERLQILVAHERYYRNKPSYLPQLQEELMQVIRKYVQVDQDAISVKFEQDDNQETLELNIILPDSQNTRNTQQDAVRNSF.

Belongs to the MinE family.

In terms of biological role, prevents the cell division inhibition by proteins MinC and MinD at internal division sites while permitting inhibition at polar sites. This ensures cell division at the proper site by restricting the formation of a division septum at the midpoint of the long axis of the cell. The chain is Cell division topological specificity factor from Nitrosomonas europaea (strain ATCC 19718 / CIP 103999 / KCTC 2705 / NBRC 14298).